A 401-amino-acid polypeptide reads, in one-letter code: Golgi membrane protein 1 (401 aa).

Met1 carries the post-translational modification N-acetylmethionine. Residues 1-12 lie on the Cytoplasmic side of the membrane; sequence MMGLGNGRRSMK. A helical; Signal-anchor for type II membrane protein membrane pass occupies residues 13–35; the sequence is SPPLVLAALVACIIVLGFNYWIA. Topologically, residues 36-401 are lumenal; that stretch reads SSRSVDLQTR…DQREKRNHTL (366 aa). Residues 40–205 adopt a coiled-coil conformation; the sequence is VDLQTRIMEL…QRQQLQALSE (166 aa). Residue Asn109 is glycosylated (N-linked (GlcNAc...) (complex) asparagine). The N-linked (GlcNAc...) asparagine glycan is linked to Asn144. The segment at 178-401 is disordered; it reads TKKGNEAVAS…DQREKRNHTL (224 aa). Ser187 is subject to Phosphoserine. Positions 228 to 238 are enriched in polar residues; sequence LGNSKSQTPAP. 2 stretches are compositionally biased toward basic and acidic residues: residues 244–255 and 264–285; these read LDSKRQVEKEET and EPQR…DRPV. A compositionally biased stretch (gly residues) spans 286 to 295; sequence GGRGFGGAGE. The span at 298–312 shows a compositional bias: polar residues; that stretch reads QTPQVQAALSVSQEN. Ser309 carries the phosphoserine; by FAM20C modification. The segment covering 350–360 has biased composition (acidic residues); it reads DYNMDENEAES. Basic and acidic residues predominate over residues 381–395; sequence EDQKRDTINLLDQRE. N-linked (GlcNAc...) asparagine glycosylation occurs at Asn398.

It belongs to the GOLM family. Interacts with DYM. Glycosylated. In terms of processing, phosphorylation sites are present in the extracellular medium. As to expression, widely expressed. Highly expressed in colon, prostate, trachea and stomach. Expressed at lower level in testis, muscle, lymphoid tissues, white blood cells and spleen. Predominantly expressed by cells of the epithelial lineage. Expressed at low level in normal liver. Expression significantly increases in virus (HBV, HCV) infected liver. Expression does not increase in liver disease due to non-viral causes (alcohol-induced liver disease, autoimmune hepatitis). Increased expression in hepatocytes appears to be a general feature of advanced liver disease. In liver tissue from patients with adult giant-cell hepatitis (GCH), it is strongly expressed in hepatocytes-derived syncytial giant cells. Constitutively expressed by biliary epithelial cells but not by hepatocytes.

It is found in the golgi apparatus. The protein resides in the cis-Golgi network membrane. Functionally, unknown. Cellular response protein to viral infection. In Homo sapiens (Human), this protein is Golgi membrane protein 1 (GOLM1).